The chain runs to 399 residues: uncharacterized protein (399 aa).

A run of 5 helical transmembrane segments spans residues 26-46, 266-286, 301-321, 324-344, and 358-378; these read LLTI…ISLG, VITI…AVGI, IGIL…FVVE, FLGL…AEVI, and AWIS…VGVI.

It belongs to the ABC-4 integral membrane protein family.

It is found in the cell membrane. This is an uncharacterized protein from Methanocaldococcus jannaschii (strain ATCC 43067 / DSM 2661 / JAL-1 / JCM 10045 / NBRC 100440) (Methanococcus jannaschii).